A 319-amino-acid polypeptide reads, in one-letter code: MamJ paralog LimJ (319 aa).

2 disordered regions span residues 1–59 (MMME…PAPV) and 145–176 (AAAPEPEPEPVPEPEPEPEPEAAHDHAATETE). Low complexity predominate over residues 30 to 52 (AALAPAADAEIPASSAPEPAAPI). Positions 150–164 (PEPEPVPEPEPEPEP) are enriched in acidic residues.

This sequence belongs to the magnetosome MamJ protein family.

The protein localises to the magnetosome. Regulates the dynamic behavior of MamK filaments; paralog MamJ also promotes MamK turnover. At least one other protein besides MamJ and LimJ is required for MamK turnover. Might connect magnetosomes to MamK filaments. In Paramagnetospirillum magneticum (strain ATCC 700264 / AMB-1) (Magnetospirillum magneticum), this protein is MamJ paralog LimJ.